We begin with the raw amino-acid sequence, 249 residues long: Serine acetyltransferase (249 aa).

Belongs to the transferase hexapeptide repeat family.

It is found in the cytoplasm. The enzyme catalyses L-serine + acetyl-CoA = O-acetyl-L-serine + CoA. It functions in the pathway amino-acid biosynthesis; L-cysteine biosynthesis; L-cysteine from L-serine: step 1/2. The sequence is that of Serine acetyltransferase (cysE) from Synechocystis sp. (strain ATCC 27184 / PCC 6803 / Kazusa).